The sequence spans 361 residues: WAT1-related protein At4g01450 (361 aa).

10 consecutive transmembrane segments (helical) span residues 8–28 (WAPM…NALV), 40–60 (VIAT…AYFW), 76–96 (LFVS…LGLS), 103–123 (GSAF…IFGF), 132–152 (IGYG…LLTM), 177–197 (WIKG…WMLI), 209–229 (YSST…LSLI), 243–263 (LTII…TVGM), 273–293 (VVSS…DFLI), and 298–318 (IYLG…IFLW). 2 consecutive EamA domains span residues 21–142 (AGMV…GTLI) and 194–317 (WMLI…YIFL).

This sequence belongs to the drug/metabolite transporter (DMT) superfamily. Plant drug/metabolite exporter (P-DME) (TC 2.A.7.4) family.

It is found in the membrane. The sequence is that of WAT1-related protein At4g01450 from Arabidopsis thaliana (Mouse-ear cress).